The primary structure comprises 508 residues: Photosystem II CP47 reaction center protein (508 aa).

Transmembrane regions (helical) follow at residues 21–36, 101–115, 140–156, 203–218, 237–252, and 457–472; these read SVHI…WAGS, IVFS…IWHW, GIHL…FGAF, IAAG…FHLS, VLSS…AFIV, and SFAL…HGAR.

It belongs to the PsbB/PsbC family. PsbB subfamily. In terms of assembly, PSII is composed of 1 copy each of membrane proteins PsbA, PsbB, PsbC, PsbD, PsbE, PsbF, PsbH, PsbI, PsbJ, PsbK, PsbL, PsbM, PsbT, PsbX, PsbY, PsbZ, Psb30/Ycf12, at least 3 peripheral proteins of the oxygen-evolving complex and a large number of cofactors. It forms dimeric complexes. Requires Binds multiple chlorophylls. PSII binds additional chlorophylls, carotenoids and specific lipids. as cofactor.

It is found in the plastid. The protein localises to the chloroplast thylakoid membrane. Its function is as follows. One of the components of the core complex of photosystem II (PSII). It binds chlorophyll and helps catalyze the primary light-induced photochemical processes of PSII. PSII is a light-driven water:plastoquinone oxidoreductase, using light energy to abstract electrons from H(2)O, generating O(2) and a proton gradient subsequently used for ATP formation. The protein is Photosystem II CP47 reaction center protein of Amborella trichopoda.